Reading from the N-terminus, the 352-residue chain is Probable protein phosphatase 2C 56 (352 aa).

Disordered regions lie at residues 18–37 (RGRR…ASRG) and 53–87 (SSSS…ITGG). Composition is skewed to low complexity over residues 23–37 (AASP…ASRG) and 53–75 (SSSS…ARTR). Positions 96–343 (SWDYSSFKGR…DNITCIVLQF (248 aa)) constitute a PPM-type phosphatase domain. Residues aspartate 132, glycine 133, aspartate 295, and aspartate 334 each contribute to the Mn(2+) site.

Belongs to the PP2C family. The cofactor is Mg(2+). It depends on Mn(2+) as a cofactor.

It carries out the reaction O-phospho-L-seryl-[protein] + H2O = L-seryl-[protein] + phosphate. The catalysed reaction is O-phospho-L-threonyl-[protein] + H2O = L-threonyl-[protein] + phosphate. This Oryza sativa subsp. japonica (Rice) protein is Probable protein phosphatase 2C 56.